The sequence spans 276 residues: ATP synthase subunit a (276 aa).

The next 6 membrane-spanning stretches (helical) occupy residues 27-47 (ITML…LEVG), 61-81 (GQTF…SLAA), 120-140 (LPFI…GALL), 159-179 (DINT…YAGL), 225-245 (LVVA…LMAL), and 246-266 (GLFT…AYIH).

Belongs to the ATPase A chain family. F-type ATPases have 2 components, CF(1) - the catalytic core - and CF(0) - the membrane proton channel. CF(1) has five subunits: alpha(3), beta(3), gamma(1), delta(1), epsilon(1). CF(0) has four main subunits: a, b, b' and c.

The protein resides in the cellular thylakoid membrane. Functionally, key component of the proton channel; it plays a direct role in the translocation of protons across the membrane. This chain is ATP synthase subunit a, found in Synechocystis sp. (strain ATCC 27184 / PCC 6803 / Kazusa).